The sequence spans 234 residues: Transcription factor UDT1 (234 aa).

The tract at residues 1 to 51 (MPRRARARGGGGGGGEEVKVEDDFIDSVLNFGGGGGGEEDGDDGEEEQQQQ) is disordered. The segment covering 37–48 (GEEDGDDGEEEQ) has biased composition (acidic residues). Residues 61–74 (EFKSKNLEAERRRR) are basic motif; degenerate. The bHLH domain occupies 61–110 (EFKSKNLEAERRRRGRLNGNIFALRAVVPKITKMSKEATLSDAIEHIKNL). Residues 75–110 (GRLNGNIFALRAVVPKITKMSKEATLSDAIEHIKNL) form a helix-loop-helix motif region.

Belongs to the bHLH protein family.

The protein resides in the nucleus. Transcription factor that plays a crucial role in tapetum development. Required for male fertility and pollen differentiation within the developing anther. Plays a major role in maintaining tapetum development, starting in early meiosis. Required for pollen mother cell meiosis. May regulate the anther-specific cysteine protease CP1 and lipid-transfer proteins C4 and C6. Required for anther development. Functions in parallel with GAMYB to regulate early anther development. Functions upstream of the transcription factor TDR and may positively regulate its transcription. The chain is Transcription factor UDT1 from Oryza sativa subsp. japonica (Rice).